An 82-amino-acid polypeptide reads, in one-letter code: Small ribosomal subunit protein bS16 (82 aa).

This sequence belongs to the bacterial ribosomal protein bS16 family.

In Methylobacillus flagellatus (strain ATCC 51484 / DSM 6875 / VKM B-1610 / KT), this protein is Small ribosomal subunit protein bS16.